We begin with the raw amino-acid sequence, 122 residues long: Large ribosomal subunit protein uL14 (122 aa).

The protein belongs to the universal ribosomal protein uL14 family. As to quaternary structure, part of the 50S ribosomal subunit. Forms a cluster with proteins L3 and L19. In the 70S ribosome, L14 and L19 interact and together make contacts with the 16S rRNA in bridges B5 and B8.

Functionally, binds to 23S rRNA. Forms part of two intersubunit bridges in the 70S ribosome. The polypeptide is Large ribosomal subunit protein uL14 (Pseudomonas paraeruginosa (strain DSM 24068 / PA7) (Pseudomonas aeruginosa (strain PA7))).